A 1257-amino-acid polypeptide reads, in one-letter code: Phosphatidylinositol 3,4,5-trisphosphate 5-phosphatase 2 (1257 aa).

An SH2 domain is found at 21 to 117 (WYHRDLSRAA…GLVCALLLPV (97 aa)). A compositionally biased stretch (basic and acidic residues) spans 119 to 132 (GEREPDPPDDRDAS). The tract at residues 119–181 (GEREPDPPDD…ESTPNGLSTV (63 aa)) is disordered. Ser-132 bears the Phosphoserine mark. The segment covering 156 to 166 (PSSPLPTPETP) has biased composition (pro residues). Phosphothreonine is present on Thr-165. Phosphoserine occurs at positions 241 and 353. A Phosphotyrosine modification is found at Tyr-887. At Ser-891 the chain carries Phosphoserine. A disordered region spans residues 897 to 986 (TGAKSKVPSV…PPKNSFNNPA (90 aa)). Residues 939-951 (PPPTGRPPAPPRA) are compositionally biased toward pro residues. An SH3-binding motif is present at residues 945 to 950 (PPAPPR). The segment covering 952-966 (VPREEPLNPRLKSEG) has biased composition (basic and acidic residues). Residues 984-987 (NPAY) carry the NPXY motif motif. The residue at position 987 (Tyr-987) is a Phosphotyrosine. Residues 999-1008 (PLEPPSLARA) show a composition bias toward low complexity. Positions 999–1119 (PLEPPSLARA…FLGEVASGDD (121 aa)) are disordered. 2 stretches are compositionally biased toward pro residues: residues 1049–1060 (LPPPDFPPPPLP) and 1088–1104 (GPPP…PPGT). Ser-1132 is subject to Phosphoserine. The disordered stretch occupies residues 1134–1196 (VDYAPGPGRS…PQGGRASGLG (63 aa)). A phosphotyrosine mark is found at Tyr-1136 and Tyr-1161. One can recognise an SAM domain in the interval 1195–1257 (LGEAGMGAWL…LLLDTLQLSK (63 aa)). Phosphoserine is present on Ser-1256.

This sequence belongs to the inositol 1,4,5-trisphosphate 5-phosphatase family. In terms of assembly, interacts with tyrosine phosphorylated form of SHC1. Interacts with EGFR. Upon stimulation by the EGF signaling pathway, it forms a complex with SHC1 and EGFR. Interacts with cytoskeletal protein SORBS3/vinexin, promoting its localization to the periphery of cells. Forms a complex with filamin (FLNA or FLNB), actin, GPIb (GP1BA or GP1BB) that regulates cortical and submembraneous actin. Interacts with c-Met/MET, when c-Met/MET is phosphorylated on 'Tyr-1356'. Interacts with p130Cas/BCAR1. Interacts with CENTD3/ARAP3 via its SAM domain. Interacts with c-Cbl/CBL and CAP/SORBS1. Interacts with activated EPHA2 receptor. Interacts with receptors FCGR2A. Interacts with FCGR2B. Interacts with tyrosine kinase ABL1. Interacts with tyrosine kinase TEC. Interacts with CSF1R. Interacts (via N-terminus) with SH3YL1 (via SH3 domain). Interacts (via SH2 domain) with tyrosine phosphorylated KLRC1 (via ITIM). Interacts with NEDD9/HEF1. In terms of processing, tyrosine phosphorylated by the members of the SRC family after exposure to a diverse array of extracellular stimuli such as insulin, growth factors such as EGF or PDGF, chemokines, integrin ligands and hypertonic and oxidative stress. May be phosphorylated upon IgG receptor FCGR2B-binding. Phosphorylated at Tyr-987 following cell attachment and spreading. Phosphorylated at Tyr-1161 following EGF signaling pathway stimulation. Widely expressed.

Its subcellular location is the cytoplasm. It is found in the cytosol. The protein resides in the cytoskeleton. It localises to the membrane. The protein localises to the cell projection. Its subcellular location is the filopodium. It is found in the lamellipodium. The protein resides in the basal cell membrane. It localises to the nucleus. The protein localises to the nucleus speckle. Its subcellular location is the spindle pole. It carries out the reaction a 1,2-diacyl-sn-glycero-3-phospho-(1D-myo-inositol-3,4,5-trisphosphate) + H2O = a 1,2-diacyl-sn-glycero-3-phospho-(1D-myo-inositol-3,4-bisphosphate) + phosphate. It catalyses the reaction 1,2-dioctanoyl-sn-glycero-3-phospho-(1D-myo-inositol-3,4,5-trisphosphate) + H2O = 1,2-dioctanoyl-sn-glycero-3-phospho-(1D-myo-inositol-3,4-bisphosphate) + phosphate. The enzyme catalyses 1,2-dihexadecanoyl-sn-glycero-3-phospho-(1D-myo-inositol-3,4,5-trisphosphate) + H2O = 1,2-dihexadecanoyl-sn-glycero-3-phospho-(1D-myo-inositol-3,4-bisphosphate) + phosphate. With respect to regulation, activated upon translocation to the sites of synthesis of PtdIns(3,4,5)P3 in the membrane. Enzymatic activity is enhanced in the presence of phosphatidylserine. Functionally, phosphatidylinositol (PtdIns) phosphatase that specifically hydrolyzes the 5-phosphate of phosphatidylinositol-3,4,5-trisphosphate (PtdIns(3,4,5)P3) to produce PtdIns(3,4)P2, thereby negatively regulating the PI3K (phosphoinositide 3-kinase) pathways. Required for correct mitotic spindle orientation and therefore progression of mitosis. Plays a central role in regulation of PI3K-dependent insulin signaling, although the precise molecular mechanisms and signaling pathways remain unclear. While overexpression reduces both insulin-stimulated MAP kinase and Akt activation, its absence does not affect insulin signaling or GLUT4 trafficking. Confers resistance to dietary obesity. May act by regulating AKT2, but not AKT1, phosphorylation at the plasma membrane. Part of a signaling pathway that regulates actin cytoskeleton remodeling. Required for the maintenance and dynamic remodeling of actin structures as well as in endocytosis, having a major impact on ligand-induced EGFR internalization and degradation. Participates in regulation of cortical and submembraneous actin by hydrolyzing PtdIns(3,4,5)P3 thereby regulating membrane ruffling. Regulates cell adhesion and cell spreading. Required for HGF-mediated lamellipodium formation, cell scattering and spreading. Acts as a negative regulator of EPHA2 receptor endocytosis by inhibiting via PI3K-dependent Rac1 activation. Acts as a regulator of neuritogenesis by regulating PtdIns(3,4,5)P3 level and is required to form an initial protrusive pattern, and later, maintain proper neurite outgrowth. Acts as a negative regulator of the FC-gamma-RIIA receptor (FCGR2A). Mediates signaling from the FC-gamma-RIIB receptor (FCGR2B), playing a central role in terminating signal transduction from activating immune/hematopoietic cell receptor systems. Upon stimulation by EGF, it is recruited by EGFR and dephosphorylates PtdIns(3,4,5)P3. Plays a negative role in regulating the PI3K-PKB pathway, possibly by inhibiting PKB activity. Down-regulates Fc-gamma-R-mediated phagocytosis in macrophages independently of INPP5D/SHIP1. In macrophages, down-regulates NF-kappa-B-dependent gene transcription by regulating macrophage colony-stimulating factor (M-CSF)-induced signaling. Plays a role in the localization of AURKA and NEDD9/HEF1 to the basolateral membrane at interphase in polarized cysts, thereby mediates cell cycle homeostasis, cell polarization and cilia assembly. Additionally promotion of cilia growth is also facilitated by hydrolysis of (PtdIns(3,4,5)P3) to PtdIns(3,4)P2. Promotes formation of apical membrane-initiation sites during the initial stages of lumen formation via Rho family-induced actin filament organization and CTNNB1 localization to cell-cell contacts. May also hydrolyze PtdIns(1,3,4,5)P4, and could thus affect the levels of the higher inositol polyphosphates like InsP6. Involved in endochondral ossification. The polypeptide is Phosphatidylinositol 3,4,5-trisphosphate 5-phosphatase 2 (Mus musculus (Mouse)).